A 389-amino-acid chain; its full sequence is Arrestin-C (389 aa).

The protein belongs to the arrestin family. Retina and pineal gland.

Its function is as follows. May play a role in an as yet undefined retina-specific signal transduction. Could bind to photoactivated-phosphorylated red/green opsins. The sequence is that of Arrestin-C (arr3) from Lithobates pipiens (Northern leopard frog).